We begin with the raw amino-acid sequence, 174 residues long: RNA pyrophosphohydrolase (174 aa).

Residues 6–149 (GYRPNVGIIL…KRDVYLGALK (144 aa)) form the Nudix hydrolase domain. Positions 38-59 (GGIKPGESPETAMYRELYEEVG) match the Nudix box motif.

Belongs to the Nudix hydrolase family. RppH subfamily. The cofactor is a divalent metal cation.

Functionally, accelerates the degradation of transcripts by removing pyrophosphate from the 5'-end of triphosphorylated RNA, leading to a more labile monophosphorylated state that can stimulate subsequent ribonuclease cleavage. The protein is RNA pyrophosphohydrolase of Neisseria meningitidis serogroup A / serotype 4A (strain DSM 15465 / Z2491).